Reading from the N-terminus, the 523-residue chain is MAALLRRLLQRERPSAASGRPVGRREANLGTDAGVAVRVRFAPSPTGFLHLGGLRTALYNYIFAKKYQGSFILRLEDTDQTRVVPGAAENIEDMLEWAGIPPDESPRRGGPAGPYQQSQRLELYAQATEALLKTGAAYPCFCSPQRLELLKKEALRNHQTPRYDNRCRNMSQEQVAQKLAKDPKPAIRFRLEQVVPAFQDLVYGWNRHEVASVEGDPVIMKSDGFPTYHLACVVDDHHMGISHVLRGSEWLVSTAKHLLLYQALGWQPPHFAHLPLLLNRDGSKLSKRQGDVFLEHFAADGFLPDSLLDIITNCGSGFAENQMGRTLPELITQFNLTQVTCHSALLDLEKLPEFNRLHLQRLVSNESQRRQLVGKLQVLVEEAFGCQLQNRDVLNPVYVERILLLRQGHICRLQDLVSPVYSYLWTRPAVGRAQLDAISEKVDVIAKRVLGLLERSSMSLTQDMLNGELKKLSEGLEGTKYSNVMKLLRMALSGQQQGPPVAEMMLALGPKEVRERIQKVVSS.

The N-terminal 41 residues, 1 to 41 (MAALLRRLLQRERPSAASGRPVGRREANLGTDAGVAVRVRF), are a transit peptide targeting the mitochondrion. 40–42 (RFA) contributes to the L-glutamate binding site. Residues 45-53 (PTGFLHLGG) carry the 'HIGH' region motif. An ATP-binding site is contributed by H50. Residues E76, 228–232 (YHLAC), and R246 each bind L-glutamate. E249 provides a ligand contact to ATP. Residue K256 is modified to N6-succinyllysine. 284-288 (KLSKR) is a binding site for ATP. Positions 284-288 (KLSKR) match the 'KMSKS' region motif. At K486 the chain carries N6-acetyllysine.

Belongs to the class-I aminoacyl-tRNA synthetase family. Glutamate--tRNA ligase type 1 subfamily.

Its subcellular location is the mitochondrion matrix. It catalyses the reaction tRNA(Glx) + L-glutamate + ATP = L-glutamyl-tRNA(Glx) + AMP + diphosphate. The catalysed reaction is tRNA(Glu) + L-glutamate + ATP = L-glutamyl-tRNA(Glu) + AMP + diphosphate. It carries out the reaction tRNA(Gln) + L-glutamate + ATP = L-glutamyl-tRNA(Gln) + AMP + diphosphate. In terms of biological role, non-discriminating glutamyl-tRNA synthetase that catalyzes aminoacylation of both mitochondrial tRNA(Glu) and tRNA(Gln) and participates in RNA aminoacylation for mitochondrial protein translation. Attachs glutamate to tRNA(Glu) or tRNA(Gln) in a two-step reaction: glutamate is first activated by ATP to form Glu-AMP and then transferred to the acceptor end of tRNA(Glu) or tRNA(Gln). In vitro, cytoplasmic tRNA(Gln) is slightly glutamylated, but with low activity. The protein is Nondiscriminating glutamyl-tRNA synthetase EARS2, mitochondrial of Homo sapiens (Human).